Here is a 146-residue protein sequence, read N- to C-terminus: Hemoglobin subunit beta (146 aa).

An N-acetylvaline modification is found at valine 1. In terms of domain architecture, Globin spans 2-146; it reads HLSAEEKAAV…VANALAHKYH (145 aa). Threonine 12 bears the Phosphothreonine mark. At serine 44 the chain carries Phosphoserine. An N6-acetyllysine modification is found at lysine 59. Residue histidine 63 coordinates heme b. Lysine 82 carries the N6-acetyllysine modification. Residue histidine 92 participates in heme b binding. Cysteine 93 is modified (S-nitrosocysteine). Lysine 144 is modified (N6-acetyllysine).

The protein belongs to the globin family. In terms of assembly, heterotetramer of two alpha chains and two beta chains. As to expression, red blood cells.

Its function is as follows. Involved in oxygen transport from the lung to the various peripheral tissues. The protein is Hemoglobin subunit beta (HBB) of Ctenodactylus gundi (Northern gundi).